A 1585-amino-acid chain; its full sequence is Histone acetyltransferase lsy-12 (1585 aa).

2 disordered regions span residues 1 to 37 (MGKK…ARRE) and 279 to 491 (GPQH…DDPV). Residues 23-37 (PKDRTARPTAAARRE) are compositionally biased toward basic and acidic residues. Polar residues predominate over residues 279–296 (GPQHENVTVSENVLSTES). The span at 302–312 (TETKRLHDSSR) shows a compositional bias: basic and acidic residues. Polar residues-rich tracts occupy residues 355 to 364 (LLSNPHSTPV) and 411 to 426 (SRLS…SNDL). Positions 431–440 (SAPSSSSAAS) are enriched in low complexity. A compositionally biased stretch (basic residues) spans 453-469 (QQRRKGNQSAARSRKIK). Positions 477–491 (QEDEPMELDSDDDPV) are enriched in acidic residues. Positions 544–830 (EQARLPERIH…YDPECLDWVP (287 aa)) constitute an MYST-type HAT domain. The C2HC MYST-type zinc-finger motif lies at 577–602 (LFICEFCFFYARSDEIMQNHAKKCML). Lysine 644 carries the N6-acetyllysine; by autocatalysis modification. 685–689 (SCIMT) is a binding site for acetyl-CoA. Catalysis depends on glutamate 720, which acts as the Proton donor/acceptor. 2 residues coordinate acetyl-CoA: serine 724 and lysine 815. 2 stretches are compositionally biased toward basic and acidic residues: residues 844-855 (SKEEIEQDEQRR) and 947-956 (VLDKSNIREE). Disordered stretches follow at residues 844–903 (SKEE…LKHE), 927–1262 (EENK…IGKS), 1286–1373 (ESTA…ASNH), and 1431–1507 (HHQF…VHPQ). The span at 977-999 (NKCNNTESEPNPSGRKTSATSSG) shows a compositional bias: polar residues. The span at 1011–1022 (TEEEEEDDDPTD) shows a compositional bias: acidic residues. Over residues 1029–1046 (DDEKPFETSVNKEKNEKS) the composition is skewed to basic and acidic residues. Basic residues predominate over residues 1047–1060 (RRGKKVSKKRRSVA). 2 stretches are compositionally biased toward basic and acidic residues: residues 1070–1081 (VRDRDEPKKAEN) and 1135–1151 (DIPK…AYDR). Over residues 1164 to 1173 (PTPDSYHSSP) the composition is skewed to low complexity. Residues 1185-1194 (LMQAQQNIYQ) are compositionally biased toward polar residues. Basic and acidic residues predominate over residues 1196–1207 (NDCHFAENDSKP). Composition is skewed to polar residues over residues 1298–1317 (AGPS…NTTP) and 1324–1333 (HPNSQQQATP). Residues 1482 to 1493 (QHQQQQPQQPQQ) show a composition bias toward low complexity.

It belongs to the MYST (SAS/MOZ) family.

The enzyme catalyses L-lysyl-[protein] + acetyl-CoA = N(6)-acetyl-L-lysyl-[protein] + CoA + H(+). Its function is as follows. Probable histone acetyltransferase. Required to initiate and then maintain lateralized gene expression in the ASE sensory neurons. Involved in determining cell fate in the ASE neurons. In Caenorhabditis elegans, this protein is Histone acetyltransferase lsy-12.